A 265-amino-acid polypeptide reads, in one-letter code: Polyphosphate glucokinase (265 aa).

Residues 1–18 (MTSTGPETSETPGATTQR) are compositionally biased toward polar residues. A disordered region spans residues 1–22 (MTSTGPETSETPGATTQRHGFG). 24 to 29 (DVGGSG) lines the ATP pocket.

Belongs to the ROK (NagC/XylR) family. Homodimer.

The catalysed reaction is [phosphate](n) + D-glucose = [phosphate](n-1) + D-glucose 6-phosphate + H(+). It catalyses the reaction D-glucose + ATP = D-glucose 6-phosphate + ADP + H(+). Its function is as follows. Catalyzes the phosphorylation of glucose using polyphosphate or ATP as the phosphoryl donor. Polyphosphate, rather than ATP, seems to be the major phosphate donor for the enzyme in M.tuberculosis. This Mycobacterium tuberculosis (strain CDC 1551 / Oshkosh) protein is Polyphosphate glucokinase (ppgK).